A 580-amino-acid polypeptide reads, in one-letter code: MSSRNPIQLLDTITINQIAAGEVIENSISVVKELVENALDAGADEIEVETLGGGQGLIVVKDNGCGMSSEDVALALKRHATSKIGEFSDVFSLSSFGFRGEALPAIASISKMEILSCPRAGEGSRTIIHGGEIVTSEAKPRQVGTTISIDSLFYNVPVRRGFQKSPQTDRMAMRKLLENRILSVENVGWSWVSERQQEFHIFKHQGFAERVAFVMGEGFMQEALRVDKGGNLVRVVGFLGSPGFHRPTRLGQRVFINDRPVDSTFISKKISEAYSMLLPPQRYPVFVLKLYLPPEWCDFNVHPQKTEVRILREEFVGEFLSETIGEVLARPQEVSVFETASTLPALRFFDEQLPESALEGLQGSNVLPVVKLTPSSSGSLPFLDREPDPLPVDRQTQISWGASQEVRFLTSLGKIVLAEDSEGVHAIFTESARKHLFYLSLVENHQHNYKSQSFLVPLCLEVTPQERIFLSSHIEEFKLLGIEISQMGPCVFSIESAPTFIGEEELKLWILSLAAESAKVDKRAMTLLIKEALTQTIFCKTLRAFDISWLSLLWQLGKPEKAFDGSQIRRLVLDEDFIKE.

Belongs to the DNA mismatch repair MutL/HexB family.

This protein is involved in the repair of mismatches in DNA. It is required for dam-dependent methyl-directed DNA mismatch repair. May act as a 'molecular matchmaker', a protein that promotes the formation of a stable complex between two or more DNA-binding proteins in an ATP-dependent manner without itself being part of a final effector complex. This is DNA mismatch repair protein MutL from Chlamydia caviae (strain ATCC VR-813 / DSM 19441 / 03DC25 / GPIC) (Chlamydophila caviae).